The sequence spans 245 residues: uncharacterized protein (245 aa).

An HTH gntR-type domain is found at 29 to 96; sequence RSLIEATFQR…AQRGFHVTPM (68 aa). Positions 56 to 75 form a DNA-binding region, H-T-H motif; that stretch reads IEDLKSRYEVSGGTVREALS.

This is an uncharacterized protein from Paraburkholderia xenovorans (strain LB400).